A 393-amino-acid chain; its full sequence is NAD(P)H-quinone oxidoreductase subunit H, chloroplastic (393 aa).

This sequence belongs to the complex I 49 kDa subunit family. In terms of assembly, NDH is composed of at least 16 different subunits, 5 of which are encoded in the nucleus.

The protein localises to the plastid. Its subcellular location is the chloroplast thylakoid membrane. The catalysed reaction is a plastoquinone + NADH + (n+1) H(+)(in) = a plastoquinol + NAD(+) + n H(+)(out). It carries out the reaction a plastoquinone + NADPH + (n+1) H(+)(in) = a plastoquinol + NADP(+) + n H(+)(out). NDH shuttles electrons from NAD(P)H:plastoquinone, via FMN and iron-sulfur (Fe-S) centers, to quinones in the photosynthetic chain and possibly in a chloroplast respiratory chain. The immediate electron acceptor for the enzyme in this species is believed to be plastoquinone. Couples the redox reaction to proton translocation, and thus conserves the redox energy in a proton gradient. In Nandina domestica (Heavenly bamboo), this protein is NAD(P)H-quinone oxidoreductase subunit H, chloroplastic.